The following is a 259-amino-acid chain: UPF0246 protein NMB0895 (259 aa).

It belongs to the UPF0246 family.

The sequence is that of UPF0246 protein NMB0895 from Neisseria meningitidis serogroup B (strain ATCC BAA-335 / MC58).